Reading from the N-terminus, the 394-residue chain is Monoterpene synthase FDS-5, chloroplastic (394 aa).

The N-terminal 65 residues, 1–65 (MASFISLSSK…NLNSQFMQVY (65 aa)), are a transit peptide targeting the chloroplast. Positions 100, 103, and 138 each coordinate isopentenyl diphosphate. Positions 145 and 149 each coordinate Mg(2+). The short motif at 145–149 (DDMMD) is the DDXXD motif element. A dimethylallyl diphosphate-binding site is contributed by Arg-154. Arg-155 contacts isopentenyl diphosphate. Lys-242, Gln-281, Lys-298, and Lys-307 together coordinate dimethylallyl diphosphate.

It belongs to the FPP/GGPP synthase family. Requires Mg(2+) as cofactor. Mn(2+) is required as a cofactor.

It is found in the plastid. The protein localises to the chloroplast. The enzyme catalyses isopentenyl diphosphate + dimethylallyl diphosphate = (2E)-geranyl diphosphate + diphosphate. It catalyses the reaction 2 dimethylallyl diphosphate = (R,R)-chrysanthemyl diphosphate + diphosphate. The catalysed reaction is 2 dimethylallyl diphosphate = (R)-lavandulyl diphosphate + diphosphate. In terms of biological role, condenses two molecules of dimethylallyl diphosphate (DMAPP) to produce mainly an irregular monoterpene, chrysanthemyl diphosphate (CPP) and lower amounts of a branched monoterpene, lavandulyl diphosphate (LPP). CPP is a precursor of the pyrethrin insecticides. When incubated with isopentenyl diphosphate (IPP) and DMAPP, catalyzes three competing isoprenoid condensation reactions, a chain elongation to give geranyl diphosphate (GPP), a cyclopropanation to give CPP and a branching to give LPP. The protein is Monoterpene synthase FDS-5, chloroplastic (FDS-5) of Artemisia spiciformis (Spiked big sagebrush).